A 468-amino-acid chain; its full sequence is bZIP transcription factor 14 (468 aa).

Disordered regions lie at residues 55–149 (SRRK…EGRA) and 234–272 (SPQS…LGKD). 2 stretches are compositionally biased toward low complexity: residues 64–82 (SFVS…SSGS) and 95–106 (VTAASTESVSSS). Over residues 112-128 (KKADTDDRVQRSRERNR) the composition is skewed to basic and acidic residues. Residues 117-165 (DDRVQRSRERNRIHARKTRQRKKEQMQSLEGRATDLKHEQIRLKQIINE) enclose the bZIP 1 domain. A basic motif 1 region spans residues 119–139 (RVQRSRERNRIHARKTRQRKK). A compositionally biased stretch (basic residues) spans 129 to 138 (IHARKTRQRK). The leucine-zipper 1 stretch occupies residues 145 to 159 (LEGRATDLKHEQIRL). The segment covering 247 to 256 (ASTSDVSGDE) has biased composition (polar residues). Residues 279-333 (EELDQIRRERNRMHAKRTRDRKRIFTEEMAEMCRILEEENHLLRVHLGGLDSDFK) enclose the bZIP 2 domain. A basic motif 2 region spans residues 285–312 (RRERNRMHAKRTRDRKRIFTEEMAEMCR). The leucine-zipper 2 stretch occupies residues 313 to 320 (ILEEENHL). The tract at residues 400-468 (ERQQREAERK…TTSLAAPVGW (69 aa)) is disordered. A compositionally biased stretch (basic and acidic residues) spans 401-410 (RQQREAERKV). Positions 417–426 (SAASDTSTSD) are enriched in low complexity.

It belongs to the bZIP family.

Its subcellular location is the nucleus. Transcriptional activator which binds to the C-box-like motif 5'-TGACGT-3' and A-box-like motif 5'-GTACGTA-3' of target promoters to positively regulate the expression of genes involved in the tricarboxylic acid (TCA) cycle in response to nitrogen starvation. May also regulate the TCA cycle during day-to-night transitions. This Phaeodactylum tricornutum (strain CCAP 1055/1) protein is bZIP transcription factor 14.